A 91-amino-acid polypeptide reads, in one-letter code: Movement protein TGBp3 (91 aa).

Residues 1-23 (MLGTRNIPTTSGLPLPPPSSSLS) lie on the Lumenal side of the membrane. A helical membrane pass occupies residues 24–46 (AYIFPTILAIIFAVFALVAIHIT). Residues 47–91 (TPEPFCTIHIDGASITITNCPDPAAILNKVAIGPWRGLSYHNNLK) lie on the Cytoplasmic side of the membrane.

Belongs to the Tymovirales TGBp3 protein family.

The protein resides in the host endoplasmic reticulum membrane. Its function is as follows. Plays a role in viral cell-to-cell propagation, by facilitating genome transport to neighboring plant cells through plasmosdesmata. May induce the formation of granular vesicles derived from the Endoplasmic reticulum, which align on actin filaments. This Cymbidium mosaic virus (strain Singapore) protein is Movement protein TGBp3.